The primary structure comprises 321 residues: Inner membrane protein YtfF (321 aa).

Topologically, residues 1-4 (MISG) are cytoplasmic. Residues 5 to 25 (VLYALLAGLMWGLIFVGPLIV) traverse the membrane as a helical segment. Residues 13-141 (LMWGLIFVGP…IGIGLACVNI (129 aa)) enclose the EamA domain. Residues 26-30 (PEYPA) are Periplasmic-facing. A helical membrane pass occupies residues 31 to 51 (MLQSMGRYLALGLIALPIAWL). The Cytoplasmic portion of the chain corresponds to 52-65 (GRVRLRQLARRDWL). The helical transmembrane segment at 66 to 86 (TALMLTMMGNLIYYFCLASAI) threads the bilayer. The Periplasmic portion of the chain corresponds to 87-92 (QRTGAP). A helical membrane pass occupies residues 93–113 (VSTMIIGTLPVVIPVFANLLY). Residues 114 to 120 (SQRDGKL) lie on the Cytoplasmic side of the membrane. The helical transmembrane segment at 121-141 (AWGKLAPALICIGIGLACVNI) threads the bilayer. Residues 142-154 (AELNHGLPDFDWA) are Periplasmic-facing. A helical transmembrane segment spans residues 155–175 (RYTSGIVLALVSVVCWAWYAL). At 176 to 194 (RNARWLRENPDKHPMMWAT) the chain is on the cytoplasmic side. The chain crosses the membrane as a helical span at residues 195–215 (AQALVTLPVSLIGYLVACYWL). The Periplasmic segment spans residues 216 to 230 (NTQTPDFSLPFGPRP). Residues 231 to 251 (LVFISLMVAIAVLCSWVGALC) form a helical membrane-spanning segment. The Cytoplasmic segment spans residues 252–261 (WNVASQLLPT). A helical transmembrane segment spans residues 262-282 (VILGPLIVFETLAGLLYTFLL). At 283–285 (RQQ) the chain is on the periplasmic side. A helical transmembrane segment spans residues 286–306 (MPPLMTLSGIALLVIGVVIAV). The Cytoplasmic segment spans residues 307 to 321 (RAKPEKPLTESVSES).

The protein localises to the cell inner membrane. The polypeptide is Inner membrane protein YtfF (ytfF) (Escherichia coli (strain K12)).